A 259-amino-acid polypeptide reads, in one-letter code: Steroidogenic acute regulatory-like protein 1 (259 aa).

An N-terminal signal peptide occupies residues 1-20 (MTLLPFTCLILLYSLGSVMS). The START domain maps to 43 to 254 (YATALKTCGE…NRRHFQNLKA (212 aa)).

The sequence is that of Steroidogenic acute regulatory-like protein 1 (strl-1) from Caenorhabditis elegans.